The chain runs to 359 residues: Mannose-1-phosphate guanylyltransferase (359 aa).

The protein belongs to the transferase hexapeptide repeat family.

The enzyme catalyses alpha-D-mannose 1-phosphate + GTP + H(+) = GDP-alpha-D-mannose + diphosphate. It functions in the pathway cell wall biogenesis. It participates in nucleotide-sugar biosynthesis; GDP-alpha-D-mannose biosynthesis; GDP-alpha-D-mannose from alpha-D-mannose 1-phosphate (GTP route): step 1/1. Its function is as follows. Catalyzes the formation of GDP-mannose from D-mannose-1-phosphate and GTP. Plays an important role in the synthesis of different glycoconjugates which are responsible for cell wall structure, virulence and immunomodulatory activity of M.tuberculosis. In Mycobacterium tuberculosis (strain ATCC 25618 / H37Rv), this protein is Mannose-1-phosphate guanylyltransferase.